Here is a 767-residue protein sequence, read N- to C-terminus: Cullin-1 (767 aa).

The Cullin neddylation domain occupies 699-760 (DRKLLLQSAI…EKEYLERQGR (62 aa)). Residue Lys-713 forms a Glycyl lysine isopeptide (Lys-Gly) (interchain with G-Cter in NEDD8) linkage.

This sequence belongs to the cullin family. Component of multiple Cul1-RING E3 ubiquitin-protein ligase complexes commonly known as SCF (SKP1-CUL1-F-box) complexes, consisting of cul1, skp1, pip1 and a variable F-box domain-containing protein as substrate-specific subunit. Binds to the pop1 homodimer, the pop2 homodimer and the pop1/pop2 heterodimer forming the SCF(pop1-pop2) complex. Interacts with pof3, pof14 and skp1. In terms of processing, neddylated; enhancing the ubiquitin-ligase activity.

The protein resides in the cytoplasm. It participates in protein modification; protein ubiquitination. In terms of biological role, core component of multiple cullin-RING-based SCF (SKP1-CUL1-F-box protein) E3 ubiquitin-protein ligase complexes, which mediate the ubiquitination of target proteins. The functional specificity of the SCF complex depends on the F-box protein as substrate recognition component. SCF(pop1-pop2) is required for the maintenance of ploidy and directs ubiquitination of cig2. The sequence is that of Cullin-1 (cul1) from Schizosaccharomyces pombe (strain 972 / ATCC 24843) (Fission yeast).